Here is a 248-residue protein sequence, read N- to C-terminus: DNA polymerase sliding clamp 2 (248 aa).

This sequence belongs to the PCNA family. The subunits circularize to form a toroid; DNA passes through its center. Replication factor C (RFC) is required to load the toroid on the DNA. Forms a dimeric complex with PCNA3 and trimeric complexes PCNA123 and PCNA323; does not form homotrimers. Crystal structures show a heterotetramer of 2 PCNA2 and 2 PCNA3, which would be large enough to clamp a Holliday junction.

Its function is as follows. Sliding clamp subunit that acts as a moving platform for DNA processing. Responsible for tethering the catalytic subunit of DNA polymerase and other proteins to DNA during high-speed replication. Both trimeric complexes inhibit DNA ligase and both 3'-5' and 5'-3' activity of Hel308 (Hjm) helicase, but stimulate Hjc, the Holliday junction cleavage enzyme. In Sulfurisphaera tokodaii (strain DSM 16993 / JCM 10545 / NBRC 100140 / 7) (Sulfolobus tokodaii), this protein is DNA polymerase sliding clamp 2.